The following is a 1185-amino-acid chain: MSMFLKTIEIKGFKSFADKTELIFTGGITSIVGPNGSGKSNISDAVRWVLGEQSVKTLRGGKMEDVIFAGTQFRKPLGLCQVSLTLDNEDKKLSLEYSNITVSRRLYRSGESEYYINNVQCRLRDIHELFMDTGIGREGYSIIGQGRIDALLSGKQEDRRLLLEEAAGIVKFRWRRSEAEKKLENTEVNLIRIEDILHTYEERLKPLELENKKADEFLRLSEELKDKEKTVLIYSLKKIQHKIDKLESSMERITSSNRESHLELTKLREDVNGYNIRMENIMDESTRCEKDYYDKRELINQGENKIKLLKQKIEDLEDNIKRNYLELKQIENDKIKKSEGITLQNQNLLELKNREKEVNIGILDYENNIKKIEKDIYSRENICKKLKEDKIQYFSNISKLRNHIISIKKDGENIVEKIDKLKSSYESYSKAIIISSEKKNKLLGEISNIKKNISVYQNKIDENNSGILELTNVLNLKENSLQKLNALYNTLEANYKMLVNFHKHYEGYNRTVKALMENIKNHKLDVPAQSCFLVGEIISLQKKFETCIEISLGNSISSVITNNEIIAKIIIKYLKDNKMGRATFLPISIIKGRKISNLHKFEDIKGFIGVASELVSYSKEFKDVLDYILGRTIICENIDNAFEIAKLAEYSFKIVTLSGDVVNSGGAITGGSLQKRSSNIIGRKREIEETLVKIENTKETLQVLNGDIRRIKSDKEKLHCQNEDFKEKIHLDNIELTKLHQQNDTIERETKKLIESRETANREIKLLYKNKEVNLNELQEEEKKLKEYSKEEIKNDDYILKMEEELKEGRNRITDLKEGLTSLKVKRAQISENILSSERELSRLDQEIKSMDIKNRSIVEEIKLSEKIIHKNELNMYSNEKEVKDLKQYMEKLQESIEKSHVKTIELKQKINVSNEKVDNLTLIINKKETSFHKIQLELTKLNSQKDNIYSRLKEDMNITCDGDIEYDVQIENLEEYKSKIVHLKSSISKLGVVNLGAIEEYKNLQKKITFLSSQKEDLIKSKQELKKVIDAMTEKMKGVFKENFVKLKKNFNDTFRELFKGGSADLVLTKGDELTGNIDITVQPPGKKLQNINLMSGGEKGLSAIALLFAMLKIKPTPFCILDEIEASLDDANVLRYAEFLRKFSRDTQFIVITHRKGTMEVSDVLYGVTMEEKGVSKIISLKL.

34-41 (PNGSGKSN) provides a ligand contact to ATP. Coiled-coil stretches lie at residues 174–376 (WRRS…EKDI) and 412–526 (ENIV…KLDV). One can recognise an SMC hinge domain in the interval 534 to 644 (VGEIISLQKK…CENIDNAFEI (111 aa)). A coiled-coil region spans residues 679 to 1039 (NIIGRKREIE…IDAMTEKMKG (361 aa)).

It belongs to the SMC family. Homodimer.

The protein resides in the cytoplasm. Its function is as follows. Required for chromosome condensation and partitioning. This is Chromosome partition protein Smc from Clostridium kluyveri (strain NBRC 12016).